The following is a 261-amino-acid chain: Putative carbamate hydrolase RutD (261 aa).

The 106-residue stretch at 14–119 (PTILLSSGLG…LINAWSKADP (106 aa)) folds into the AB hydrolase-1 domain.

This sequence belongs to the AB hydrolase superfamily. Hydrolase RutD family.

It catalyses the reaction carbamate + 2 H(+) = NH4(+) + CO2. Its function is as follows. Involved in pyrimidine catabolism. May facilitate the hydrolysis of carbamate, a reaction that can also occur spontaneously. This Agrobacterium fabrum (strain C58 / ATCC 33970) (Agrobacterium tumefaciens (strain C58)) protein is Putative carbamate hydrolase RutD.